The chain runs to 738 residues: RNA polymerase II degradation factor 1 (738 aa).

In terms of domain architecture, CUE spans 21 to 63 (ALKSKIDTLTELFPDWTSDDLIDIVQEYDDLETIIDKITSGAV). Residues 69 to 84 (VKKPAKKEKYEKKEQQ) are compositionally biased toward basic and acidic residues. Disordered regions lie at residues 69–455 (VKKP…QQQQ), 467–503 (YLSQQQQYAQQQQQHPQPQSQQPQSQQSPQSQKQGNN), and 640–688 (NGQE…QPVN). Positions 103–121 (KSSNNSNSFTSTKHNSSNN) are enriched in low complexity. Basic and acidic residues predominate over residues 211–220 (HNNKEEHKQI). Residues 224-237 (SLSSKKTTSRTSAS) show a composition bias toward low complexity. Basic and acidic residues predominate over residues 256-291 (KKTESPLENVAELKKEISDIKKDDQKSEASEEKVNE). Serine 260, serine 273, and serine 307 each carry phosphoserine. Composition is skewed to acidic residues over residues 298-328 (EQEEETAEPSEENEDRVPEVDGEEVQEEAEE) and 337-358 (QTAEELEQEQDNVAAPEEEVTV). Position 338 is a phosphothreonine (threonine 338). Low complexity-rich tracts occupy residues 380–455 (VPQP…QQQQ) and 467–498 (YLSQQQQYAQQQQQHPQPQSQQPQSQQSPQSQ). The tract at residues 500–530 (QGNNVAAQQYYMYQNQFPGYSYPGMFDSQGY) is contains the proteolytic activation cleavage site. Serine 646 is modified (phosphoserine). Over residues 660 to 688 (QKQSQQQQQQQPQGQPQPEVQMQNGQPVN) the composition is skewed to low complexity.

It belongs to the DEF1 family. Homodimer; may form higher order oligomers. Interacts with the large RNA polymerase II subunit RPO21; the interaction is direct and serves to bridge RPO21 to the Elongin complex in a manner dependent on transcription stress. Interacts with RAD26. Post-translationally, ubiquitinated. In terms of processing, proteolytically cleaved by the proteasome in response to transcription stress; the resulting N-terminal form constitutes the activated nuclear form and the C-terminal portion is degraded.

It is found in the cytoplasm. The protein localises to the nucleus. It localises to the chromosome. The protein resides in the telomere. Its function is as follows. Recruits the ubiquitination machinery to RNA polymerase II for polyubiquitination, removal and degradation, when the transcription-coupled repair (TCR) factor RAD26 fails to efficiently displace stalled RNA polymerase II. Also involved in telomere length regulation. Binds DNA. The polypeptide is RNA polymerase II degradation factor 1 (DEF1) (Saccharomyces cerevisiae (strain JAY291) (Baker's yeast)).